The chain runs to 432 residues: Glutamyl-tRNA reductase (432 aa).

Substrate-binding positions include 55–58 (TCNR), serine 114, 119–121 (ETQ), and glutamine 125. Cysteine 56 (nucleophile) is an active-site residue. An NADP(+)-binding site is contributed by 194-199 (GAGEMI).

It belongs to the glutamyl-tRNA reductase family. As to quaternary structure, homodimer.

It carries out the reaction (S)-4-amino-5-oxopentanoate + tRNA(Glu) + NADP(+) = L-glutamyl-tRNA(Glu) + NADPH + H(+). It functions in the pathway porphyrin-containing compound metabolism; protoporphyrin-IX biosynthesis; 5-aminolevulinate from L-glutamyl-tRNA(Glu): step 1/2. In terms of biological role, catalyzes the NADPH-dependent reduction of glutamyl-tRNA(Glu) to glutamate 1-semialdehyde (GSA). The chain is Glutamyl-tRNA reductase from Burkholderia orbicola (strain MC0-3).